Here is a 594-residue protein sequence, read N- to C-terminus: Laccase-2 (594 aa).

Positions 1–20 (MGGIIKLSFLFCSLISLVNS) are cleaved as a signal peptide. The N-linked (GlcNAc...) asparagine glycan is linked to Asn67. Plastocyanin-like domains follow at residues 70 to 183 (EALA…HSPN) and 195 to 357 (DRIV…RYTG). 2 residues coordinate Cu cation: His117 and His119. A glycan (N-linked (GlcNAc...) asparagine) is linked at Asn124. A disulfide bridge connects residues Cys138 and Cys578. Residues His162 and His164 each coordinate Cu cation. Asn242, Asn286, Asn320, Asn358, Asn397, Asn430, Asn452, and Asn458 each carry an N-linked (GlcNAc...) asparagine glycan. The Plastocyanin-like 3 domain maps to 466–563 (PVNIIINNLD…KMAVVVVQPE (98 aa)). Cu cation-binding residues include His480, His483, and His485. The N-linked (GlcNAc...) asparagine glycan is linked to Asn508. The Cu cation site is built by His543, Cys544, His545, and His549.

This sequence belongs to the multicopper oxidase family. It depends on Cu cation as a cofactor.

The protein localises to the secreted. The protein resides in the cell wall. The catalysed reaction is 4 hydroquinone + O2 = 4 benzosemiquinone + 2 H2O. Its function is as follows. Laccase that catalyzes the oxidation of certain aromatic compounds, including L-dopa, to quinones, which then polymerize to melanin. Able to oxidize a wide variety of aromatic diphenol and diamino groups in the ortho, meta, and para positions but not monophenolic groups such as in phenol, tyramine, or tyrosine. Plays an important role in virulence. Plays a role in dissemination to extrapulmonary sites but is not involved in pulmonary growth or in elicitation of cellular immune responses in the lung. The protein is Laccase-2 (LAC2) of Cryptococcus neoformans var. grubii serotype A (strain H99 / ATCC 208821 / CBS 10515 / FGSC 9487) (Filobasidiella neoformans var. grubii).